Reading from the N-terminus, the 597-residue chain is Elongation factor 4 (597 aa).

The region spanning 2-184 (KNIRNFSIIA…EIVAKIPAPA (183 aa)) is the tr-type G domain. GTP-binding positions include 14–19 (DHGKST) and 131–134 (NKID).

This sequence belongs to the TRAFAC class translation factor GTPase superfamily. Classic translation factor GTPase family. LepA subfamily.

The protein resides in the cell inner membrane. The catalysed reaction is GTP + H2O = GDP + phosphate + H(+). Its function is as follows. Required for accurate and efficient protein synthesis under certain stress conditions. May act as a fidelity factor of the translation reaction, by catalyzing a one-codon backward translocation of tRNAs on improperly translocated ribosomes. Back-translocation proceeds from a post-translocation (POST) complex to a pre-translocation (PRE) complex, thus giving elongation factor G a second chance to translocate the tRNAs correctly. Binds to ribosomes in a GTP-dependent manner. This is Elongation factor 4 from Neisseria meningitidis serogroup A / serotype 4A (strain DSM 15465 / Z2491).